The primary structure comprises 655 residues: Acetyl-coenzyme A synthetase (655 aa).

Residues 196 to 199 (RGGK) and threonine 316 contribute to the CoA site. Residues 392 to 394 (GEP), 416 to 421 (DTWWQT), aspartate 507, and arginine 522 contribute to the ATP site. Serine 530 provides a ligand contact to CoA. Arginine 533 provides a ligand contact to ATP. Residues valine 544 and valine 549 each coordinate Mg(2+). Position 619 is an N6-acetyllysine (lysine 619).

Belongs to the ATP-dependent AMP-binding enzyme family. Mg(2+) is required as a cofactor. In terms of processing, acetylated. Deacetylation by the SIR2-homolog deacetylase activates the enzyme.

It carries out the reaction acetate + ATP + CoA = acetyl-CoA + AMP + diphosphate. Functionally, catalyzes the conversion of acetate into acetyl-CoA (AcCoA), an essential intermediate at the junction of anabolic and catabolic pathways. AcsA undergoes a two-step reaction. In the first half reaction, AcsA combines acetate with ATP to form acetyl-adenylate (AcAMP) intermediate. In the second half reaction, it can then transfer the acetyl group from AcAMP to the sulfhydryl group of CoA, forming the product AcCoA. This is Acetyl-coenzyme A synthetase from Thiobacillus denitrificans (strain ATCC 25259 / T1).